A 162-amino-acid chain; its full sequence is RNA pyrophosphohydrolase (162 aa).

The 145-residue stretch at 11-155 (PYRPCVGIVL…KRAVYEEVVA (145 aa)) folds into the Nudix hydrolase domain. The Nudix box signature appears at 45–66 (GGIDEGEKPREAALRELWEETG).

This sequence belongs to the Nudix hydrolase family. RppH subfamily. Requires a divalent metal cation as cofactor.

Accelerates the degradation of transcripts by removing pyrophosphate from the 5'-end of triphosphorylated RNA, leading to a more labile monophosphorylated state that can stimulate subsequent ribonuclease cleavage. The chain is RNA pyrophosphohydrolase from Cereibacter sphaeroides (strain ATCC 17029 / ATH 2.4.9) (Rhodobacter sphaeroides).